Reading from the N-terminus, the 409-residue chain is MASGKAAGKSDAPTPIIKLGGPKPPKIGSSGNASWFQAIKAKKLNVPQPKFEGSGVPDNNNIKPSQQHGYWRRQARYKPGKSGRKPVPDAWYFYYTGTGPAADLNWGENQDGIVWVAAKGADTKSRSNQGTRDPDKFDQYPLRFSDGGPDGNFRWDFIPLNRGRSGRSTAASSAASSRAPSREGSRGRRSGAEDDLIARAAKIIQDQQKRGSRITKAKADEMAHRRYCKRTIPPGYRVDQVFGPRTKGKEGNFGDDKMNEEGIKDGRVTATLNLIPSSHACLFGSRVTPKLQPDGLHLKFEFTTVVPRDDPQFDNYVKICDQCVDGVGTRPKDDEPRPKSRSSSRPATRGNSPAPRQQRPKKEKKPKKQDDEVDKALTSDEERNNAQLEFDDEPKVINWGDSALGENEL.

Disordered regions lie at residues 1-32, 47-84, 121-145, and 164-194; these read MASG…SSGN, PQPK…KSGR, ADTK…LRFS, and RSGR…GAED. The segment at 29–160 is RNA-binding; the sequence is SSGNASWFQA…GNFRWDFIPL (132 aa). The region spanning 31–156 is the CoV N NTD domain; the sequence is GNASWFQAIK…GGPDGNFRWD (126 aa). Polar residues predominate over residues 57–68; it reads PDNNNIKPSQQH. Over residues 70–84 the composition is skewed to basic residues; sequence YWRRQARYKPGKSGR. Positions 164–179 are enriched in low complexity; sequence RSGRSTAASSAASSRA. Residues 180 to 192 are compositionally biased toward basic and acidic residues; sequence PSREGSRGRRSGA. Serine 190 carries the post-translational modification Phosphoserine; by host. The 117-residue stretch at 215 to 331 folds into the CoV N CTD domain; it reads TKAKADEMAH…QCVDGVGTRP (117 aa). A dimerization region spans residues 226–333; it reads RYCKRTIPPG…VDGVGTRPKD (108 aa). A disulfide bridge links cysteine 320 with cysteine 323. A disordered region spans residues 326–409; the sequence is GVGTRPKDDE…GDSALGENEL (84 aa). A compositionally biased stretch (basic residues) spans 358–367; the sequence is QRPKKEKKPK. The span at 368-384 shows a compositional bias: basic and acidic residues; that stretch reads KQDDEVDKALTSDEERN. Residue threonine 378 is modified to Phosphothreonine; by host. Residue serine 379 is modified to Phosphoserine; by host.

This sequence belongs to the gammacoronavirus nucleocapsid protein family. Homooligomer. Both monomeric and oligomeric forms interact with RNA. Interacts with protein M. Interacts with NSP3; this interaction serves to tether the genome to the newly translated replicase-transcriptase complex at a very early stage of infection. Post-translationally, ADP-ribosylated. The ADP-ribosylation is retained in the virion during infection. Phosphorylated on serine and threonine residues.

The protein localises to the virion. Its subcellular location is the host endoplasmic reticulum-Golgi intermediate compartment. The protein resides in the host Golgi apparatus. Functionally, packages the positive strand viral genome RNA into a helical ribonucleocapsid (RNP) and plays a fundamental role during virion assembly through its interactions with the viral genome and membrane protein M. Plays an important role in enhancing the efficiency of subgenomic viral RNA transcription as well as viral replication. This Gallus gallus (Chicken) protein is Nucleoprotein.